We begin with the raw amino-acid sequence, 183 residues long: Peptidyl-tRNA hydrolase (183 aa).

Tyr-14 is a tRNA binding site. His-19 serves as the catalytic Proton acceptor. TRNA-binding residues include Tyr-61, Asn-63, and Asn-109.

This sequence belongs to the PTH family. As to quaternary structure, monomer.

It localises to the cytoplasm. The enzyme catalyses an N-acyl-L-alpha-aminoacyl-tRNA + H2O = an N-acyl-L-amino acid + a tRNA + H(+). Its function is as follows. Hydrolyzes ribosome-free peptidyl-tRNAs (with 1 or more amino acids incorporated), which drop off the ribosome during protein synthesis, or as a result of ribosome stalling. In terms of biological role, catalyzes the release of premature peptidyl moieties from peptidyl-tRNA molecules trapped in stalled 50S ribosomal subunits, and thus maintains levels of free tRNAs and 50S ribosomes. The sequence is that of Peptidyl-tRNA hydrolase from Aliarcobacter butzleri (strain RM4018) (Arcobacter butzleri).